We begin with the raw amino-acid sequence, 227 residues long: uncharacterized protein (227 aa).

An N-terminal signal peptide occupies residues 1-22 (MDSVMRKSLFLLLPLVVTNAHA).

This is an uncharacterized protein from Salmonella typhi.